Consider the following 404-residue polypeptide: Formate-dependent phosphoribosylglycinamide formyltransferase (404 aa).

N(1)-(5-phospho-beta-D-ribosyl)glycinamide is bound by residues 27–28 (EL) and E87. Residues R120, K162, 167–172 (SSGKGQ), 202–205 (EGFI), and E210 contribute to the ATP site. The ATP-grasp domain occupies 125–320 (RLAAETLGLP…EFELHARALL (196 aa)). E279 and E291 together coordinate Mg(2+). N(1)-(5-phospho-beta-D-ribosyl)glycinamide is bound by residues D298, K367, and 374 to 375 (RR).

Belongs to the PurK/PurT family. Homodimer.

It catalyses the reaction N(1)-(5-phospho-beta-D-ribosyl)glycinamide + formate + ATP = N(2)-formyl-N(1)-(5-phospho-beta-D-ribosyl)glycinamide + ADP + phosphate + H(+). The protein operates within purine metabolism; IMP biosynthesis via de novo pathway; N(2)-formyl-N(1)-(5-phospho-D-ribosyl)glycinamide from N(1)-(5-phospho-D-ribosyl)glycinamide (formate route): step 1/1. Functionally, involved in the de novo purine biosynthesis. Catalyzes the transfer of formate to 5-phospho-ribosyl-glycinamide (GAR), producing 5-phospho-ribosyl-N-formylglycinamide (FGAR). Formate is provided by PurU via hydrolysis of 10-formyl-tetrahydrofolate. This is Formate-dependent phosphoribosylglycinamide formyltransferase from Bordetella pertussis (strain Tohama I / ATCC BAA-589 / NCTC 13251).